A 908-amino-acid chain; its full sequence is Zinc finger CCCH domain-containing protein 41 (908 aa).

A compositionally biased stretch (polar residues) spans 1 to 13 (MELSVSSPKQSVL). Positions 1–124 (MELSVSSPKQ…GRGNYGSWAQ (124 aa)) are disordered. Positions 20–34 (SDPEEEHEISEEEDD) are enriched in acidic residues. Polar residues-rich tracts occupy residues 48–59 (SQSLEQDSSDQA) and 90–105 (GQRVQFDNQRMRSNPM). The segment at 200–228 (GIPRQRCRDFEERGFCLRGDMCPMEHGMN) adopts a C3H1-type zinc-finger fold. The segment at 333–375 (NVAPLDDSNQDAAENGCGIRDSRSTSQSVWGRMKGSNSQANSK) is disordered. Over residues 356–373 (STSQSVWGRMKGSNSQAN) the composition is skewed to polar residues. The 73-residue stretch at 438-510 (RTLFVNYVPH…RFIKLWWANR (73 aa)) folds into the RRM domain. Disordered regions lie at residues 558–590 (PTFQTGGAPSSSEQPKPVVVTTSGPKVTPLQQK), 629–695 (VVKR…KQRP), and 807–908 (RESN…QIHQ). Residues 559–588 (TFQTGGAPSSSEQPKPVVVTTSGPKVTPLQ) are compositionally biased toward polar residues. The stretch at 587–630 (LQQKKADTLERLKETLRKKQEMLEQKRNEYRKKLATLEKQGTVV) forms a coiled coil. Positions 630–647 (VKREEADEPDAKRVKLDT) are enriched in basic and acidic residues. Phosphoserine is present on serine 657. Residues 677 to 688 (AKLSTETPSPDS) show a composition bias toward polar residues. The span at 807 to 828 (RESNNNNNNSNSLSVSRDNLSS) shows a compositional bias: low complexity. The span at 846-863 (KTSSTEEPENTNVSGDND) shows a compositional bias: polar residues. Residues 865–886 (TLDKQETKESDNDNNKSNHESI) are compositionally biased toward basic and acidic residues. A compositionally biased stretch (acidic residues) spans 898–908 (TDEEQSEQIHQ).

The protein is Zinc finger CCCH domain-containing protein 41 of Arabidopsis thaliana (Mouse-ear cress).